Consider the following 313-residue polypeptide: Dihydroorotate dehydrogenase B (NAD(+)), catalytic subunit (313 aa).

Residues Ser-21 and 45 to 46 (KA) contribute to the FMN site. Substrate is bound by residues Lys-45 and 69-73 (NAIGL). FMN contacts are provided by Asn-99 and Asn-127. Asn-127 is a binding site for substrate. Cys-130 functions as the Nucleophile in the catalytic mechanism. Ile-191 contacts FMN. Residue 192–193 (NT) participates in substrate binding. FMN contacts are provided by residues Gly-217, 243–244 (GG), and 265–266 (GT).

This sequence belongs to the dihydroorotate dehydrogenase family. Type 1 subfamily. Heterotetramer of 2 PyrK and 2 PyrD type B subunits. Requires FMN as cofactor.

It is found in the cytoplasm. The catalysed reaction is (S)-dihydroorotate + NAD(+) = orotate + NADH + H(+). It functions in the pathway pyrimidine metabolism; UMP biosynthesis via de novo pathway; orotate from (S)-dihydroorotate (NAD(+) route): step 1/1. Its function is as follows. Catalyzes the conversion of dihydroorotate to orotate with NAD(+) as electron acceptor. The polypeptide is Dihydroorotate dehydrogenase B (NAD(+)), catalytic subunit (pyrD) (Bacillus caldolyticus).